We begin with the raw amino-acid sequence, 79 residues long: MADAEHERIFKKFDTDGDGKISAAELEEALKKLGSVTPDDVTRMMAKIDTDGDGNISFQEFTEFASANPGLMKDVAKVF.

2 EF-hand domains span residues 1–36 and 39–71; these read MADAEHERIFKKFDTDGDGKISAAELEEALKKLGSV and DDVTRMMAKIDTDGDGNISFQEFTEFASANPGL. 10 residues coordinate Ca(2+): aspartate 14, aspartate 16, aspartate 18, lysine 20, glutamate 25, aspartate 49, aspartate 51, aspartate 53, asparagine 55, and glutamate 60.

The polypeptide is Polcalcin Bra r 1 (Brassica campestris (Field mustard)).